Here is a 677-residue protein sequence, read N- to C-terminus: MTDLSHSREKDKINPVVFYTSAGLILLFSLTTILFRDFSALWIGRTLDWVSKTFGWYYLLAATLYIVFVVCIACSRFGSVKLGPEQSKPEFSLLSWAAMLFAAGIGIDLMFFSVAEPVTQYMQPPEGAGQTIEAARQAMVWTLFHYGLTGWSMYALMGMALGYFSYRYNLPLTIRSALYPIFGKRINGPIGHSVDIAAVIGTIFGIATTLGIGVVQLNYGLSVLFDIPDSMAAKAALIALSVIIATISVTSGVDKGIRVLSELNVALALGLILFVLFMGDTSFLLNALVLNVGDYVNRFMGMTLNSFAFDRPVEWMNNWTLFFWAWWVAWSPFVGLFLARISRGRTIRQFVLGTLIIPFTFTLLWLSVFGNSALYEIIHGGAAFAEEAMVHPERGFYSLLAQYPAFTFSASVATITGLLFYVTSADSGALVLGNFTSQLKDINSDAPGWLRVFWSVAIGLLTLGMLMTNGISALQNTTVIMGLPFSFVIFFVMAGLYKSLKVEDYRRESANRDTAPRPLGLQDRLSWKKRLSRLMNYPGTRYTKQMMETVCYPAMEEVAQELRLRGAYVELKSLPPEEGQQLGHLDLLVHMGEEQNFVYQIWPQQYSVPGFTYRARSGKSTYYRLETFLLEGSQGNDLMDYSKEQVITDILDQYERHLNFIHLHREAPGHSVMFPDA.

12 helical membrane passes run 15-35 (PVVF…TILF), 54-74 (FGWY…CIAC), 94-114 (LSWA…FFSV), 144-164 (FHYG…LGYF), 196-216 (IAAV…GVVQ), 233-253 (AKAA…TSGV), 265-285 (VALA…SFLL), 319-339 (WTLF…LFLA), 350-370 (FVLG…SVFG), 412-432 (VATI…ALVL), 452-472 (VFWS…NGIS), and 477-497 (TTVI…AGLY).

Belongs to the BCCT transporter (TC 2.A.15) family.

It is found in the cell inner membrane. The catalysed reaction is choline(in) + H(+)(in) = choline(out) + H(+)(out). It functions in the pathway amine and polyamine biosynthesis; betaine biosynthesis via choline pathway. Its function is as follows. High-affinity uptake of choline driven by a proton-motive force. In Escherichia coli O157:H7, this protein is High-affinity choline transport protein (betT).